An 82-amino-acid polypeptide reads, in one-letter code: Cytochrome b-c1 complex subunit 8 (82 aa).

The Mitochondrial matrix segment spans residues 2–39; that stretch reads GRQFGHLTRVRHVITYSLSPFEQRAFPHYFSKGIPNVL. K33 carries the N6-acetyllysine; alternate modification. N6-succinyllysine; alternate is present on K33. Residues 40-68 traverse the membrane as a helical segment; sequence RRTRACILRVAPPFVAFYLVYTWGTQEFE. The Mitochondrial intermembrane segment spans residues 69–82; the sequence is KSKRKNPAAYENDR.

This sequence belongs to the UQCRQ/QCR8 family. Component of the ubiquinol-cytochrome c oxidoreductase (cytochrome b-c1 complex, complex III, CIII), a multisubunit enzyme composed of 11 subunits. The complex is composed of 3 respiratory subunits cytochrome b, cytochrome c1 and Rieske protein UQCRFS1, 2 core protein subunits UQCRC1/QCR1 and UQCRC2/QCR2, and 6 low-molecular weight protein subunits UQCRH/QCR6, UQCRB/QCR7, UQCRQ/QCR8, UQCR10/QCR9, UQCR11/QCR10 and subunit 9, the cleavage product of Rieske protein UQCRFS1. The complex exists as an obligatory dimer and forms supercomplexes (SCs) in the inner mitochondrial membrane with NADH-ubiquinone oxidoreductase (complex I, CI) and cytochrome c oxidase (complex IV, CIV), resulting in different assemblies (supercomplex SCI(1)III(2)IV(1) and megacomplex MCI(2)III(2)IV(2)). Interacts with UQCC6.

It is found in the mitochondrion inner membrane. Component of the ubiquinol-cytochrome c oxidoreductase, a multisubunit transmembrane complex that is part of the mitochondrial electron transport chain which drives oxidative phosphorylation. The respiratory chain contains 3 multisubunit complexes succinate dehydrogenase (complex II, CII), ubiquinol-cytochrome c oxidoreductase (cytochrome b-c1 complex, complex III, CIII) and cytochrome c oxidase (complex IV, CIV), that cooperate to transfer electrons derived from NADH and succinate to molecular oxygen, creating an electrochemical gradient over the inner membrane that drives transmembrane transport and the ATP synthase. The cytochrome b-c1 complex catalyzes electron transfer from ubiquinol to cytochrome c, linking this redox reaction to translocation of protons across the mitochondrial inner membrane, with protons being carried across the membrane as hydrogens on the quinol. In the process called Q cycle, 2 protons are consumed from the matrix, 4 protons are released into the intermembrane space and 2 electrons are passed to cytochrome c. This Bos taurus (Bovine) protein is Cytochrome b-c1 complex subunit 8 (UQCRQ).